A 362-amino-acid polypeptide reads, in one-letter code: MVVIYLNSTGNTYWIPIYSLNDKIREPYIFYVFAIFQTSIYILTGYILVRICWIFLTIKVFHDNMNIMMCWFLCQWFQAFLAKIVLIPYQFGIIKISMDINKTYYDWWSDTVEKSAILREDVNIWPIYFASYFLWHYMYSILFAVLAVGLERVCATWYIQDYEHVSRRHIPILLIAATNLITLPYAYQTTNNRTPLLQTCLQSIFIGSVAVFGYIMLWRVNLAWRNRIVNLKFTHNEKYSLARKFQIEENIKSLILARKLVVSASVFILVVTILLAVLLFDPHGYDAFFVHALDNSMLLPALVMSLTLLSCSPAWKERFISGLPIIRRLKSSSVAHQNSYSTASSAGKETEAYFEQLRSSWA.

Helical transmembrane passes span 29-49 (IFYV…YILV), 67-87 (IMMC…IVLI), 127-147 (IYFA…AVLA), 170-190 (IPIL…YQTT), 204-224 (IFIG…NLAW), 260-280 (LVVS…VLLF), and 288-308 (FFVH…SLTL).

The protein belongs to the nematode receptor-like protein sre family.

The protein localises to the membrane. The polypeptide is Serpentine receptor class epsilon-37 (sre-37) (Caenorhabditis elegans).